A 323-amino-acid chain; its full sequence is Glyoxylate/hydroxypyruvate reductase B (323 aa).

Catalysis depends on residues R237 and E266. Residue H285 is the Proton donor of the active site.

Belongs to the D-isomer specific 2-hydroxyacid dehydrogenase family. GhrB subfamily. As to quaternary structure, homodimer.

The protein localises to the cytoplasm. The catalysed reaction is glycolate + NADP(+) = glyoxylate + NADPH + H(+). It carries out the reaction (R)-glycerate + NAD(+) = 3-hydroxypyruvate + NADH + H(+). The enzyme catalyses (R)-glycerate + NADP(+) = 3-hydroxypyruvate + NADPH + H(+). Its function is as follows. Catalyzes the NADPH-dependent reduction of glyoxylate and hydroxypyruvate into glycolate and glycerate, respectively. This is Glyoxylate/hydroxypyruvate reductase B from Klebsiella pneumoniae (strain 342).